The primary structure comprises 334 residues: D-alanine--D-alanine ligase (334 aa).

One can recognise an ATP-grasp domain in the interval 111–315 (KRVCLSHGVP…YEDLCIEILR (205 aa)). An ATP-binding site is contributed by 141-196 (AAEFGLPLMLKAPHEGSTIGIAKVETAEGMQAGFDLCAKYEAVVLVEQFVKGRELT). The Mg(2+) site is built by Asp268, Glu282, and Asn284.

The protein belongs to the D-alanine--D-alanine ligase family. Mg(2+) serves as cofactor. Requires Mn(2+) as cofactor.

It is found in the cytoplasm. The enzyme catalyses 2 D-alanine + ATP = D-alanyl-D-alanine + ADP + phosphate + H(+). It functions in the pathway cell wall biogenesis; peptidoglycan biosynthesis. In terms of biological role, cell wall formation. The polypeptide is D-alanine--D-alanine ligase (Herminiimonas arsenicoxydans).